Here is a 160-residue protein sequence, read N- to C-terminus: 6,7-dimethyl-8-ribityllumazine synthase (160 aa).

5-amino-6-(D-ribitylamino)uracil-binding positions include phenylalanine 23, 61–63 (SFE), and 85–87 (AVI). 90–91 (DT) is a (2S)-2-hydroxy-3-oxobutyl phosphate binding site. Residue histidine 93 is the Proton donor of the active site. Phenylalanine 118 serves as a coordination point for 5-amino-6-(D-ribitylamino)uracil. Arginine 132 provides a ligand contact to (2S)-2-hydroxy-3-oxobutyl phosphate.

This sequence belongs to the DMRL synthase family.

The enzyme catalyses (2S)-2-hydroxy-3-oxobutyl phosphate + 5-amino-6-(D-ribitylamino)uracil = 6,7-dimethyl-8-(1-D-ribityl)lumazine + phosphate + 2 H2O + H(+). It participates in cofactor biosynthesis; riboflavin biosynthesis; riboflavin from 2-hydroxy-3-oxobutyl phosphate and 5-amino-6-(D-ribitylamino)uracil: step 1/2. Functionally, catalyzes the formation of 6,7-dimethyl-8-ribityllumazine by condensation of 5-amino-6-(D-ribitylamino)uracil with 3,4-dihydroxy-2-butanone 4-phosphate. This is the penultimate step in the biosynthesis of riboflavin. This is 6,7-dimethyl-8-ribityllumazine synthase from Synechococcus sp. (strain CC9311).